The primary structure comprises 336 residues: E3 ubiquitin-protein ligase RING2 (336 aa).

N-acetylserine is present on Ser-2. The interval 2-179 is interaction with HIP2; the sequence is SQAVQTNGTQ…AEDNGDSSHC (178 aa). Ser-41 carries the post-translational modification Phosphoserine. The RING-type zinc finger occupies 51–91; it reads CPICLDMLKNTMTTKECLHRFCADCIITALRSGNKECPTCR. The interaction with nucleosomes via an acidic patch on histone H2A and histone H2B stretch occupies residues 93 to 98; sequence KLVSKR. Lys-112 is covalently cross-linked (Glycyl lysine isopeptide (Lys-Gly) (interchain with G-Cter in ubiquitin)). 2 positions are modified to phosphoserine: Ser-143 and Ser-168. The interval 157-213 is disordered; it reads QRGKKQQIENGSGAEDNGDSSHCSNASTHSNQEAGPSNKRTKTSDDSGLEPDNNNAA. Positions 176–191 are enriched in polar residues; that stretch reads SSHCSNASTHSNQEAG. Residues Lys-249 and Lys-323 each participate in a glycyl lysine isopeptide (Lys-Gly) (interchain with G-Cter in SUMO2) cross-link.

As to quaternary structure, component of chromatin-associated Polycomb (PcG) complexes. Component of a number of PRC1-like complexes; these complexes contain either the polycomb group ring finger protein PCGF1, or PCGF2, or PCGF3, or BMI1, or PCGF5, or PCGF6. Distinct PRC1-like complexes are composed of a RING1 subunit (RING1B or RING1A), one of the six PCGF proteins (PCGF1, PCGF2, PCGF3, BMI1, PCGF5 or PCGF6), one PHC protein (PHC1, PHC2 or PHC3) and one of the CBX proteins (CBX2, CBX4, CBX6, CBX7 or CBX8). Part of a complex that contains RNF2, UB2D3 and BMI1; within that complex RNF2 and BMI1 form a tight heterodimer, where UB2D3 interacts only with RNF2. The complex composed of RNF2, UB2D3 and BMI1 binds nucleosomes, and has activity only with nucleosomal histone H2A. Part of a complex that contains PCGF5, RNF2 and UBE2D3. Part of a complex that contains AUTS2, PCGF5, RNF2, CSNK2B and RYBP. Interacts with CBX6 and CBX8. Interacts with PHC1, PCGF2, RYBP, CBX7, CBX4, CBX2, RNF1/RING1, BMI1 and PHC2. Interaction with RYBP and CBX7 is mutually exclusive; both compete for the same binding site on RNF2. Component of repressive BCOR complex containing a Polycomb group subcomplex at least composed of RYBP, PCGF1, BCOR and RING1. Interacts with CBX2 and PHC1. Interacts with CHTOP. Interacts with AURKB. Part of the E2F6.com-1 complex in G0 phase composed of E2F6, MGA, MAX, TFDP1, CBX3, BAT8, EUHMTASE1, RNF1/RING1, RNF2/RING2, MBLR, L3MBTL2 and YAF2. Component of some MLL1/MLL complex, at least composed of the core components KMT2A/MLL1, ASH2L, HCFC1/HCF1, WDR5 and RBBP5, as well as the facultative components BACC1, CHD8, E2F6, HSP70, INO80C, KANSL1, LAS1L, MAX, MCRS1, MGA, MYST1/MOF, PELP1, PHF20, PRP31, RING2, RUVB1/TIP49A, RUVB2/TIP49B, SENP3, TAF1, TAF4, TAF6, TAF7, TAF9 and TEX10. Interacts with RYBP, HIP2 and TFCP2. Interacts with NUPR1. Interacts with SAMD7 in a PHC2-dependent manner. Monoubiquitinated, by auto-ubiquitination. Polyubiquitinated in the presence of UBE2D3 (in vitro).

Its subcellular location is the nucleus. It is found in the cytoplasm. The protein resides in the chromosome. The catalysed reaction is S-ubiquitinyl-[E2 ubiquitin-conjugating enzyme]-L-cysteine + [acceptor protein]-L-lysine = [E2 ubiquitin-conjugating enzyme]-L-cysteine + N(6)-ubiquitinyl-[acceptor protein]-L-lysine.. It functions in the pathway protein modification; protein ubiquitination. E3 ubiquitin-protein ligase that mediates monoubiquitination of 'Lys-119' of histone H2A (H2AK119Ub), thereby playing a central role in histone code and gene regulation. H2AK119Ub gives a specific tag for epigenetic transcriptional repression and participates in X chromosome inactivation of female mammals. May be involved in the initiation of both imprinted and random X inactivation. Essential component of a Polycomb group (PcG) multiprotein PRC1-like complex, a complex class required to maintain the transcriptionally repressive state of many genes, including Hox genes, throughout development. PcG PRC1 complex acts via chromatin remodeling and modification of histones, rendering chromatin heritably changed in its expressibility. E3 ubiquitin-protein ligase activity is enhanced by BMI1/PCGF4. Acts as the main E3 ubiquitin ligase on histone H2A of the PRC1 complex, while RING1 may rather act as a modulator of RNF2/RING2 activity. Plays a role in the transcriptional repression of genes that are required for pluripotency in embryonic stem cells, thereby contributing to differentiation of the ectodermal and endodermal germ layers. Association with the chromosomal DNA is cell-cycle dependent. In resting B- and T-lymphocytes, interaction with AURKB leads to block its activity, thereby maintaining transcription in resting lymphocytes. Also acts as a negative regulator of autophagy by mediating ubiquitination of AMBRA1, leading to its subsequent degradation. The protein is E3 ubiquitin-protein ligase RING2 (RNF2) of Pongo abelii (Sumatran orangutan).